Reading from the N-terminus, the 472-residue chain is Pentatricopeptide repeat-containing protein At5g46100 (472 aa).

11 PPR repeats span residues 50–84 (DQSS…NCVV), 85–119 (SEDI…DCDP), 120–154 (SQKA…GLPP), 155–190 (TVAS…GCDP), 191–225 (DSYT…DCAP), 226–260 (TVVT…GIEP), 261–295 (NVFT…GCRP), 296–330 (NMVT…GLKP), 331–365 (DAGL…GITP), 373–406 (HVKT…GISV), and 407–441 (EVET…GCIP).

Belongs to the PPR family. P subfamily.

The protein is Pentatricopeptide repeat-containing protein At5g46100 of Arabidopsis thaliana (Mouse-ear cress).